The sequence spans 119 residues: Basic phospholipase A2 notexin (119 aa).

7 cysteine pairs are disulfide-bonded: C11-C71, C27-C118, C29-C45, C44-C99, C51-C92, C60-C85, and C78-C90. Residues Y28, G30, and G32 each contribute to the Ca(2+) site. Residue H48 is part of the active site. D49 provides a ligand contact to Ca(2+). D93 is a catalytic residue.

The protein belongs to the phospholipase A2 family. Group I subfamily. D49 sub-subfamily. In terms of assembly, monomer. Ca(2+) is required as a cofactor. In terms of tissue distribution, expressed by the venom gland.

The protein localises to the secreted. It catalyses the reaction a 1,2-diacyl-sn-glycero-3-phosphocholine + H2O = a 1-acyl-sn-glycero-3-phosphocholine + a fatty acid + H(+). Functionally, snake venom phospholipase A2 (PLA2) that inhibits neuromuscular transmission by blocking acetylcholine release from the nerve termini. Is directly toxic to skeletal muscle upon local application in vivo (dystrophic effect). Also has direct nephrotoxicity in experimental mice; a single subcutaneous dose (1.38 ug/kg) produces renal tubular and glomerular damage within 24 hours. PLA2 catalyzes the calcium-dependent hydrolysis of the 2-acyl groups in 3-sn-phosphoglycerides. This chain is Basic phospholipase A2 notexin, found in Notechis scutatus scutatus (Mainland tiger snake).